An 858-amino-acid chain; its full sequence is Taste receptor type 1 member 3 (858 aa).

Positions 1–20 are cleaved as a signal peptide; the sequence is MPALAIMGLSLAAFLELGMG. Topologically, residues 21–572 are extracellular; that stretch reads ASLCLSQQFK…RPKFLAWGEP (552 aa). N-linked (GlcNAc...) asparagine; when associated with variant T-60 glycosylation is present at Asn-58. 9 N-linked (GlcNAc...) asparagine glycosylation sites follow: Asn-85, Asn-130, Asn-203, Asn-264, Asn-379, Asn-387, Asn-418, Asn-439, and Asn-482. A helical transmembrane segment spans residues 573–593; sequence VVLSLLLLLCLVLGLALAALG. At 594–610 the chain is on the cytoplasmic side; it reads LSVHHWDSPLVQASGGS. The chain crosses the membrane as a helical span at residues 611 to 631; sequence QFCFGLICLGLFCLSVLLFPG. The Extracellular segment spans residues 632–644; that stretch reads RPSSASCLAQQPM. A helical transmembrane segment spans residues 645-665; the sequence is AHLPLTGCLSTLFLQAAETFV. The Cytoplasmic segment spans residues 666 to 687; sequence ESELPLSWANWLCSYLRGLWAW. The chain crosses the membrane as a helical span at residues 688–708; sequence LVVLLATFVEAALCAWYLIAF. Topologically, residues 709 to 735 are extracellular; it reads PPEVVTDWSVLPTEVLEHCHVRSWVSL. A helical transmembrane segment spans residues 736–756; the sequence is GLVHITNAMLAFLCFLGTFLV. The Cytoplasmic segment spans residues 757–767; the sequence is QSQPGRYNRAR. A helical transmembrane segment spans residues 768 to 788; sequence GLTFAMLAYFITWVSFVPLLA. Residues 789 to 796 are Extracellular-facing; that stretch reads NVQVAYQP. Residues 797–817 form a helical membrane-spanning segment; it reads AVQMGAILVCALGILVTFHLP. Topologically, residues 818 to 858 are cytoplasmic; it reads KCYVLLWLPKLNTQEFFLGRNAKKAADENSGGGEAAQGHNE.

This sequence belongs to the G-protein coupled receptor 3 family. TAS1R subfamily. Forms homodimers or heterodimers with TAS1R1 and TAS1R2. The Thr-60 variant is predicted to introduce a novel N-linked glycosylation site at Asn-58. The addition of even a short carbohydrate group at Asn-58 is predicted to disrupt one of the contact surfaces required for stability of a dimer. Therefore a Thr-60 variant N-glycosylated at Asn-58 is predicted to be precluded from forming homodimers or heterodimers. Expressed in circumvallate, foliate and fungiform taste papillae as well as in taste buds on the palate. Also expressed in testis. Not expressed in brain, heart, kidney, liver or spleen. The topographic distribution in various taste papillae is different from those of other T1R members.

The protein resides in the cell membrane. In terms of biological role, putative taste receptor. TAS1R1/TAS1R3 responds to the umami taste stimulus (the taste of monosodium glutamate) and also to most of the 20 standard L-amino acids, but not to their D-enantiomers or other compounds. TAS1R2/TAS1R3 recognizes diverse natural and synthetic sweeteners. TAS1R3 is essential for the recognition and response to the disaccharide trehalose. Sequence differences within and between species can significantly influence the selectivity and specificity of taste responses. The polypeptide is Taste receptor type 1 member 3 (Tas1r3) (Mus musculus (Mouse)).